Consider the following 619-residue polypeptide: UvrABC system protein C (619 aa).

The region spanning Thr20 to Val98 is the GIY-YIG domain. Residues Asp207 to Met242 form the UVR domain.

It belongs to the UvrC family. As to quaternary structure, interacts with UvrB in an incision complex.

Its subcellular location is the cytoplasm. The UvrABC repair system catalyzes the recognition and processing of DNA lesions. UvrC both incises the 5' and 3' sides of the lesion. The N-terminal half is responsible for the 3' incision and the C-terminal half is responsible for the 5' incision. In Xanthomonas euvesicatoria pv. vesicatoria (strain 85-10) (Xanthomonas campestris pv. vesicatoria), this protein is UvrABC system protein C.